Here is a 432-residue protein sequence, read N- to C-terminus: Glycosyltransferase 6 (432 aa).

Over M1–G18 the chain is Cytoplasmic. The helical; Signal-anchor for type II membrane protein transmembrane segment at V19–F39 threads the bilayer. The Lumenal segment spans residues S40–W432. N315 carries N-linked (GlcNAc...) asparagine glycosylation.

The protein belongs to the glycosyltransferase 34 family.

The protein resides in the golgi apparatus membrane. Probable glycosyltransferase that may be involved in the biosynthesis of xyloglucan. The chain is Glycosyltransferase 6 (GT6) from Arabidopsis thaliana (Mouse-ear cress).